The sequence spans 204 residues: 3-isopropylmalate dehydratase small subunit (204 aa).

This sequence belongs to the LeuD family. LeuD type 1 subfamily. As to quaternary structure, heterodimer of LeuC and LeuD.

The catalysed reaction is (2R,3S)-3-isopropylmalate = (2S)-2-isopropylmalate. It functions in the pathway amino-acid biosynthesis; L-leucine biosynthesis; L-leucine from 3-methyl-2-oxobutanoate: step 2/4. Functionally, catalyzes the isomerization between 2-isopropylmalate and 3-isopropylmalate, via the formation of 2-isopropylmaleate. The protein is 3-isopropylmalate dehydratase small subunit of Vesicomyosocius okutanii subsp. Calyptogena okutanii (strain HA).